Here is a 344-residue protein sequence, read N- to C-terminus: N-acetyl-gamma-glutamyl-phosphate reductase (344 aa).

The active site involves Cys-150.

This sequence belongs to the NAGSA dehydrogenase family. Type 1 subfamily.

The protein localises to the cytoplasm. The enzyme catalyses N-acetyl-L-glutamate 5-semialdehyde + phosphate + NADP(+) = N-acetyl-L-glutamyl 5-phosphate + NADPH + H(+). Its pathway is amino-acid biosynthesis; L-arginine biosynthesis; N(2)-acetyl-L-ornithine from L-glutamate: step 3/4. Catalyzes the NADPH-dependent reduction of N-acetyl-5-glutamyl phosphate to yield N-acetyl-L-glutamate 5-semialdehyde. The polypeptide is N-acetyl-gamma-glutamyl-phosphate reductase (Pseudomonas putida (strain W619)).